A 347-amino-acid chain; its full sequence is MDENKKRALSVALSQIEKQFGKGSVMRMGDRVIEAVEAIPTGSLMLDLALGIGGLPKGRVVEIYGPESSGKTTLTLQAIAQCQKRGGTAAFIDAEHALDPIYAGKLGVNVDDLLLSQPDTGEQALEIADMLVRSGSIDIMVIDSVAALTPRAEIEGEMGDQLPGLQARLMSQALRKLTGNIKRSNTLVIFINQLRMKIGIMMPGQSPETTTGGNALKFYASVRLDIRRIGAIKKGDEIIGNQTKIKVVKNKLAPPFKQVVTEILYGEGISREGELIEMGVEAKLVEKAGAWYSYGGERIGQGKDNARGYLRENPHFAAKLEADLREKFEPTELSREEGDEDTLEDAM.

65-72 serves as a coordination point for ATP; the sequence is GPESSGKT. A compositionally biased stretch (basic and acidic residues) spans 327 to 336; sequence KFEPTELSRE. The segment at 327-347 is disordered; sequence KFEPTELSREEGDEDTLEDAM. Over residues 337-347 the composition is skewed to acidic residues; the sequence is EGDEDTLEDAM.

The protein belongs to the RecA family.

It localises to the cytoplasm. Functionally, can catalyze the hydrolysis of ATP in the presence of single-stranded DNA, the ATP-dependent uptake of single-stranded DNA by duplex DNA, and the ATP-dependent hybridization of homologous single-stranded DNAs. It interacts with LexA causing its activation and leading to its autocatalytic cleavage. In Xylella fastidiosa (strain M23), this protein is Protein RecA.